An 85-amino-acid chain; its full sequence is Large ribosomal subunit protein bL27 (85 aa).

This sequence belongs to the bacterial ribosomal protein bL27 family.

This chain is Large ribosomal subunit protein bL27, found in Azobacteroides pseudotrichonymphae genomovar. CFP2.